The sequence spans 602 residues: Proteasome-associated ATPase (602 aa).

A coiled-coil region spans residues 13 to 89 (PDAAEVERLR…LREEVDRLGQ (77 aa)). 289–294 (GCGKTL) is an ATP binding site. Residues 601 to 602 (YL) form a docks into pockets in the proteasome alpha-ring region.

It belongs to the AAA ATPase family. Homohexamer. Assembles into a hexameric ring structure that caps the 20S proteasome core. Strongly interacts with the prokaryotic ubiquitin-like protein Pup through a hydrophobic interface; the interacting region of ARC lies in its N-terminal coiled-coil domain. There is one Pup binding site per ARC hexamer ring. Upon ATP-binding, the C-terminus of ARC interacts with the alpha-rings of the proteasome core, possibly by binding to the intersubunit pockets.

The protein operates within protein degradation; proteasomal Pup-dependent pathway. Its function is as follows. ATPase which is responsible for recognizing, binding, unfolding and translocation of pupylated proteins into the bacterial 20S proteasome core particle. May be essential for opening the gate of the 20S proteasome via an interaction with its C-terminus, thereby allowing substrate entry and access to the site of proteolysis. Thus, the C-termini of the proteasomal ATPase may function like a 'key in a lock' to induce gate opening and therefore regulate proteolysis. This is Proteasome-associated ATPase from Mycobacteroides abscessus (strain ATCC 19977 / DSM 44196 / CCUG 20993 / CIP 104536 / JCM 13569 / NCTC 13031 / TMC 1543 / L948) (Mycobacterium abscessus).